Here is a 925-residue protein sequence, read N- to C-terminus: NADH:fumarate oxidoreductase (925 aa).

At Thr-447 the chain carries FMN phosphoryl threonine. Residues Ala-492, Glu-511, Asn-519, Thr-520, Ala-525, Gly-526, and Val-633 each contribute to the FAD site. Ala-525 provides a ligand contact to fumarate. Ala-525 serves as a coordination point for succinate. Residues His-719, Ser-731, and Glu-732 each contribute to the succinate site. Residues Ser-731 and Glu-732 each coordinate fumarate. Arg-756 functions as the Proton donor in the catalytic mechanism. His-859 is a binding site for fumarate. A succinate-binding site is contributed by His-859. The FAD site is built by His-860 and Glu-889. Fumarate is bound by residues Arg-899 and Gly-902. Positions 899 and 902 each coordinate succinate. FAD is bound by residues Ala-904 and Val-905.

This sequence belongs to the FAD-dependent oxidoreductase 2 family. FRD/SDH subfamily. Monomer. The cofactor is FAD. FMN is required as a cofactor. Post-translationally, is flavinylated on Thr-447 by ApbE2, encoded in a neighboring gene. Flavinylation is essential for catalytic activity.

The protein resides in the cytoplasm. The enzyme catalyses succinate + NAD(+) = fumarate + NADH + H(+). Its function is as follows. Catalyzes the anaerobic reduction of fumarate to succinate. Uses NADH as the inherent electron donor in this process. Is involved in anaerobic fumarate respiration in K.pneumoniae. This is NADH:fumarate oxidoreductase from Klebsiella pneumoniae (strain 342).